We begin with the raw amino-acid sequence, 260 residues long: MALRRPMVAGNWKMNGSAQLAQELFKKFATKLQDDSAEVVLCPPSIYLESVRQLLDENKEALNGCLVRMGAQNLSQHDFGAYTGEISGQMLKDSGCRYVIIGHSERRRMYGETSVIVAEKFAAAQKHGLTPILCVGESGPAREARRTFEVIAEELDVVIEKNGTMAFDNAIIAYEPLWAVGTGKSATPEQAQEVHAFIRKRLSEVSPFIGENIRILYGGSVTPSNAADLFAQPDVDGGLIGGVSLNATEFLSLCTIAMSA.

Residue 11–13 (NWK) participates in substrate binding. Catalysis depends on His-103, which acts as the Electrophile. The active-site Proton acceptor is Glu-175. Substrate is bound by residues Gly-181, Ser-220, and 241-242 (GG).

It belongs to the triosephosphate isomerase family. Homodimer.

The protein localises to the cytoplasm. The enzyme catalyses D-glyceraldehyde 3-phosphate = dihydroxyacetone phosphate. It functions in the pathway carbohydrate biosynthesis; gluconeogenesis. Its pathway is carbohydrate degradation; glycolysis; D-glyceraldehyde 3-phosphate from glycerone phosphate: step 1/1. Involved in the gluconeogenesis. Catalyzes stereospecifically the conversion of dihydroxyacetone phosphate (DHAP) to D-glyceraldehyde-3-phosphate (G3P). The chain is Triosephosphate isomerase from Shewanella halifaxensis (strain HAW-EB4).